A 466-amino-acid polypeptide reads, in one-letter code: Adenylosuccinate lyase (466 aa).

Residues 21-22 (RY), 97-99 (NHD), and 130-131 (TS) contribute to the substrate site. Catalysis depends on His180, which acts as the Proton donor/acceptor. Residue Gln259 participates in substrate binding. Residue Ser307 is the Proton donor/acceptor of the active site. Substrate is bound by residues Arg347, Ser352, and Arg356.

It belongs to the lyase 1 family. Adenylosuccinate lyase subfamily. As to quaternary structure, homotetramer. Residues from neighboring subunits contribute catalytic and substrate-binding residues to each active site.

The enzyme catalyses N(6)-(1,2-dicarboxyethyl)-AMP = fumarate + AMP. The catalysed reaction is (2S)-2-[5-amino-1-(5-phospho-beta-D-ribosyl)imidazole-4-carboxamido]succinate = 5-amino-1-(5-phospho-beta-D-ribosyl)imidazole-4-carboxamide + fumarate. The protein operates within purine metabolism; AMP biosynthesis via de novo pathway; AMP from IMP: step 2/2. Its pathway is purine metabolism; IMP biosynthesis via de novo pathway; 5-amino-1-(5-phospho-D-ribosyl)imidazole-4-carboxamide from 5-amino-1-(5-phospho-D-ribosyl)imidazole-4-carboxylate: step 2/2. This Dictyostelium discoideum (Social amoeba) protein is Adenylosuccinate lyase (purB).